The primary structure comprises 236 residues: Glucosamine-6-phosphate deaminase (236 aa).

Asp-67 (proton acceptor; for enolization step) is an active-site residue. The active-site For ring-opening step is Asn-136. The Proton acceptor; for ring-opening step role is filled by His-138. The active-site For ring-opening step is Glu-143.

It belongs to the glucosamine/galactosamine-6-phosphate isomerase family. NagB subfamily.

It catalyses the reaction alpha-D-glucosamine 6-phosphate + H2O = beta-D-fructose 6-phosphate + NH4(+). It participates in amino-sugar metabolism; N-acetylneuraminate degradation; D-fructose 6-phosphate from N-acetylneuraminate: step 5/5. In terms of biological role, catalyzes the reversible isomerization-deamination of glucosamine 6-phosphate (GlcN6P) to form fructose 6-phosphate (Fru6P) and ammonium ion. The chain is Glucosamine-6-phosphate deaminase from Lachnoclostridium phytofermentans (strain ATCC 700394 / DSM 18823 / ISDg) (Clostridium phytofermentans).